Consider the following 62-residue polypeptide: Sperm protamine P1 (62 aa).

Positions 1–62 (MARYRHSRSR…RYSRRRRRRY (62 aa)) are disordered.

The protein belongs to the protamine P1 family. As to expression, testis.

Its subcellular location is the nucleus. The protein localises to the chromosome. Protamines substitute for histones in the chromatin of sperm during the haploid phase of spermatogenesis. They compact sperm DNA into a highly condensed, stable and inactive complex. This chain is Sperm protamine P1 (PRM1), found in Bettongia penicillata (Brush-tailed bettong).